The primary structure comprises 496 residues: NADH-ubiquinone oxidoreductase 51 kDa subunit, mitochondrial (496 aa).

A mitochondrion-targeting transit peptide spans 1-30 (MISRAAAPSSSIASLSSRSLRAQAPAARSF). 98–107 (GRGGAGFPSG) is a binding site for NAD(+). 214-261 (GMGAYVCGEETSLIESIEGKAGKPRLKPPFPAAVGLFGCPSTVTNVET) serves as a coordination point for FMN. Residues C393, C396, C399, and C439 each coordinate [4Fe-4S] cluster.

It belongs to the complex I 51 kDa subunit family. Complex I is composed of about 40 different subunits. This is a component of the flavoprotein-sulfur (FP) fragment of the enzyme. FMN serves as cofactor. Requires [4Fe-4S] cluster as cofactor.

It localises to the mitochondrion inner membrane. The catalysed reaction is a ubiquinone + NADH + 5 H(+)(in) = a ubiquinol + NAD(+) + 4 H(+)(out). Its function is as follows. Core subunit of the mitochondrial membrane respiratory chain NADH dehydrogenase (Complex I) that is believed to belong to the minimal assembly required for catalysis. Complex I functions in the transfer of electrons from NADH to the respiratory chain. The immediate electron acceptor for the enzyme is believed to be ubiquinone. This chain is NADH-ubiquinone oxidoreductase 51 kDa subunit, mitochondrial (NUO51), found in Aspergillus niger.